The following is a 384-amino-acid chain: Brix domain-containing protein F44G4.1 (384 aa).

Disordered stretches follow at residues 1–58 (MAPK…KVVK) and 82–135 (SKAT…PQKE). A compositionally biased stretch (acidic residues) spans 18–48 (FVEEEVTGDVDEDGFEQAEDMPDEVDSDEDE). Residues 96–114 (LPKSQRGKALKRALRKDKR) show a composition bias toward basic residues. A compositionally biased stretch (basic and acidic residues) spans 115 to 127 (ARQGERAQIRDEL). One can recognise a Brix domain in the interval 177 to 360 (PKVMITMTPK…LKWLQKGTFD (184 aa)).

The polypeptide is Brix domain-containing protein F44G4.1 (Caenorhabditis elegans).